We begin with the raw amino-acid sequence, 669 residues long: MYRRSYVFQARQERYERAQPAGPAAQPGGTAPGLAALQALGERVAVQVQRARALQQRHAGLRRQLDAFQRLGEQPGPEDALARHVEANLQRARDLTAEHARLERQEAEAQRALDEFRSKYENECECQLVLKEMLERLNKEADEALLRNLHLQLEAQFLQADISVAKDRYKKNLLEIQTYITVLQQIVQTAPQVSLVTGMRESGLLMQEKLFTEREVAALQNQLEEGREAVTHLQAQKAELQAQTTALEQAIKHAHECYDEELQLYNEQIENLRKEIEEAERSLERSSYDCRQLAVAQQTLRNELDRYHRIIEIEGSRLSSVFIETPISLITPSHGAPLSLGSSVKDLARAVQDITAAKPRQKALPKSLPKRKEIIAQDKVEETLEDAPLKPPQEPKALQVERKAEGGSQPGAGGGHGVSPTQEGGPEDVPDGGQISKAFGKLCKVVKERVSGHKEPEPEPPTDLFTKGRHVLVTGESSFVDPEFYSSSIPARGGVVISIEEDSMHHDGHVEPSPGQPMPPVENGQGVPQGREGDHSNHQQGTDKNGLRAKEPKDLEEKDDDGKKEAEGSRRPCPVIIPGPDEPSTSHSQTSGSNQGGPVGPASKSSSLLAKGPSKALSIKKVEVVESIEKISTESIQTYEETSVIVETLIGKSKGNKKLGEKSLPDTRA.

Residues 1–33 (MYRRSYVFQARQERYERAQPAGPAAQPGGTAPG) form a head region. A Phosphoserine modification is found at Ser5. In terms of domain architecture, IF rod spans 33–318 (GLAALQALGE…RIIEIEGSRL (286 aa)). A coil 1A region spans residues 34 to 68 (LAALQALGERVAVQVQRARALQQRHAGLRRQLDAF). Residue Ala35 is modified to N-acetylalanine. The segment at 69-77 (QRLGEQPGP) is linker 1. The tract at residues 78-177 (EDALARHVEA…RYKKNLLEIQ (100 aa)) is coil 1B. The segment at 178–194 (TYITVLQQIVQTAPQVS) is linker 12. Positions 195–318 (LVTGMRESGL…RIIEIEGSRL (124 aa)) are coil 2. Positions 319 to 669 (SSVFIETPIS…GEKSLPDTRA (351 aa)) are tail. At Ser339 the chain carries Phosphoserine. Disordered regions lie at residues 380–435 (VEET…GGQI), 449–468 (RVSG…FTKG), and 505–618 (HHDG…KALS). The span at 408–417 (SQPGAGGGHG) shows a compositional bias: gly residues. Residue Gly432 is the site of N-myristoyl glycine attachment. Ser513 is modified (phosphoserine). Basic and acidic residues predominate over residues 545-570 (NGLRAKEPKDLEEKDDDGKKEAEGSR). Residues 583-593 (PSTSHSQTSGS) are compositionally biased toward polar residues. Phosphothreonine is present on Thr585.

Belongs to the intermediate filament family. In terms of assembly, part of a complex required for lens intermediate filament formation composed of BFSP1, BFSP2 and CRYAA. Identified in a complex that contains VIM, EZR, AHNAK, BFSP1, BFSP2, ANK2, PLEC, PRX and spectrin. Found in a complex composed of PPL (via C-terminal linker domain), BFSP1 and BFSP2 in the retinal lens. Within the complex interacts with BFSP2. Interacts (via C-terminus) with MIP (via C-terminus) in aged lens fiber cells. In terms of processing, proteolytically cleaved during lens cell fiber differentiation with increased fragmentation as fiber cell age increases. Myristoylated at Gly-432 following proteolytic cleavage at Asp-431. Post-translationally, acetylated at Ala-35 following proteolytic cleavage at Leu-34. As to expression, detected in eye lens fiber cells (at protein level). Expressed in retinal lens epithelial cells (at protein level).

Its subcellular location is the cell membrane. The protein localises to the cytoplasm. It is found in the cytoskeleton. The protein resides in the cell cortex. Its function is as follows. Required for the correct formation of lens intermediate filaments as part of a complex composed of BFSP1, BFSP2 and CRYAA. Involved in altering the calcium regulation of MIP water permeability. The chain is Filensin (Bfsp1) from Mus musculus (Mouse).